Reading from the N-terminus, the 487-residue chain is E3 ubiquitin-protein ligase RNF8 (487 aa).

Residues 38 to 92 (VTVGRGFGVTYQLVSKICPLMISRNHCILKQNAEGQWTIKDNKSLNGVWLNRERL) form the FHA domain. Residues 68–72 (QNAEG) are required for interaction with PIWIL1. Disordered stretches follow at residues 143 to 176 (MMEK…KSKI) and 182 to 201 (EPGQ…QPSE). Ser157 is subject to Phosphoserine. An RING-type zinc finger spans residues 405–443 (CIICSEYFVEAVTLNCAHSFCSYCINEWMKRKVECPICR).

This sequence belongs to the RNF8 family. Homodimer. Forms a E2-E3 ubiquitin ligase complex composed of the RNF8 homodimer and a E2 heterodimer of UBE2N and UBE2V2. Interacts with class III E2s, including UBE2E1, UBE2E2, and UBE2E3 and with UBE2N. Interacts with RXRA. Interacts (via FHA domain) with phosphorylated HERC2 (via C-terminus). Interacts with PIWIL1; leading to sequester RNF8 in the cytoplasm. Interacts with WRAP53/TCAB1. Post-translationally, autoubiquitinated through 'Lys-48' and 'Lys-63' of ubiquitin. 'Lys-63' polyubiquitination is mediated by UBE2N. 'Lys-29'-type polyubiquitination is also observed, but it doesn't require its own functional RING-type zinc finger.

The protein localises to the nucleus. The protein resides in the cytoplasm. Its subcellular location is the midbody. It is found in the chromosome. It localises to the telomere. The enzyme catalyses S-ubiquitinyl-[E2 ubiquitin-conjugating enzyme]-L-cysteine + [acceptor protein]-L-lysine = [E2 ubiquitin-conjugating enzyme]-L-cysteine + N(6)-ubiquitinyl-[acceptor protein]-L-lysine.. Its pathway is protein modification; protein ubiquitination. Functionally, E3 ubiquitin-protein ligase that plays a key role in DNA damage signaling via 2 distinct roles: by mediating the 'Lys-63'-linked ubiquitination of histones H2A and H2AX and promoting the recruitment of DNA repair proteins at double-strand breaks (DSBs) sites, and by catalyzing 'Lys-48'-linked ubiquitination to remove target proteins from DNA damage sites. Following DNA DSBs, it is recruited to the sites of damage by ATM-phosphorylated MDC1 and catalyzes the 'Lys-63'-linked ubiquitination of histones H2A and H2AX, thereby promoting the formation of TP53BP1 and BRCA1 ionizing radiation-induced foci (IRIF). Also controls the recruitment of UIMC1-BRCC3 (RAP80-BRCC36) and PAXIP1/PTIP to DNA damage sites. Promotes the recruitment of NBN to DNA damage sites by catalyzing 'Lys-6'-linked ubiquitination of NBN. Also recruited at DNA interstrand cross-links (ICLs) sites and catalyzes 'Lys-63'-linked ubiquitination of histones H2A and H2AX, leading to recruitment of FAAP20 and Fanconi anemia (FA) complex, followed by interstrand cross-link repair. H2A ubiquitination also mediates the ATM-dependent transcriptional silencing at regions flanking DSBs in cis, a mechanism to avoid collision between transcription and repair intermediates. Promotes the formation of 'Lys-63'-linked polyubiquitin chains via interactions with the specific ubiquitin-conjugating UBE2N/UBC13 and ubiquitinates non-histone substrates such as PCNA. Substrates that are polyubiquitinated at 'Lys-63' are usually not targeted for degradation. Also catalyzes the formation of 'Lys-48'-linked polyubiquitin chains via interaction with the ubiquitin-conjugating UBE2L6/UBCH8, leading to degradation of substrate proteins such as CHEK2, JMJD2A/KDM4A and KU80/XRCC5: it is still unclear how the preference toward 'Lys-48'- versus 'Lys-63'-linked ubiquitination is regulated but it could be due to RNF8 ability to interact with specific E2 specific ligases. For instance, interaction with phosphorylated HERC2 promotes the association between RNF8 and UBE2N/UBC13 and favors the specific formation of 'Lys-63'-linked ubiquitin chains. Promotes non-homologous end joining (NHEJ) by promoting the 'Lys-48'-linked ubiquitination and degradation the of KU80/XRCC5. Following DNA damage, mediates the ubiquitination and degradation of JMJD2A/KDM4A in collaboration with RNF168, leading to unmask H4K20me2 mark and promote the recruitment of TP53BP1 at DNA damage sites. Following DNA damage, mediates the ubiquitination and degradation of POLD4/p12, a subunit of DNA polymerase delta. In the absence of POLD4, DNA polymerase delta complex exhibits higher proofreading activity. In addition to its function in damage signaling, also plays a role in higher-order chromatin structure by mediating extensive chromatin decondensation. Involved in the activation of ATM by promoting histone H2B ubiquitination, which indirectly triggers histone H4 'Lys-16' acetylation (H4K16ac), establishing a chromatin environment that promotes efficient activation of ATM kinase. Required in the testis, where it plays a role in the replacement of histones during spermatogenesis. At uncapped telomeres, promotes the joining of deprotected chromosome ends by inducing H2A ubiquitination and TP53BP1 recruitment, suggesting that it may enhance cancer development by aggravating telomere-induced genome instability in case of telomeric crisis. Promotes the assembly of RAD51 at DNA DSBs in the absence of BRCA1 and TP53BP1 Also involved in class switch recombination in immune system, via its role in regulation of DSBs repair. May be required for proper exit from mitosis after spindle checkpoint activation and may regulate cytokinesis. May play a role in the regulation of RXRA-mediated transcriptional activity. Not involved in RXRA ubiquitination by UBE2E2. The polypeptide is E3 ubiquitin-protein ligase RNF8 (Bos taurus (Bovine)).